Consider the following 90-residue polypeptide: Caspase recruitment domain-containing protein 18 (90 aa).

The CARD domain occupies 1 to 90 (MADQLLRKKR…PQLASKMGLH (90 aa)).

In terms of assembly, interacts with pro-CASP1. Interacts with CARD8. As to expression, primarily expressed in the heart and placenta.

Inhibits generation of IL-1-beta by interacting with caspase-1 and preventing its association with RIP2. Down-regulates the release of IL1B. The sequence is that of Caspase recruitment domain-containing protein 18 (CARD18) from Homo sapiens (Human).